A 516-amino-acid chain; its full sequence is Flavonoid-6-hydroxylase (516 aa).

The helical transmembrane segment at 3-23 (FNAAVCAALAFISLLSYYLIW) threads the bilayer. Position 455 (Cys-455) interacts with heme.

It belongs to the cytochrome P450 family. It depends on heme as a cofactor.

Its subcellular location is the membrane. It carries out the reaction genkwanin + reduced [NADPH--hemoprotein reductase] + O2 = scutellarein 7-methyl ether + oxidized [NADPH--hemoprotein reductase] + H2O. It catalyses the reaction (2S)-sakuranetin + reduced [NADPH--hemoprotein reductase] + O2 = (2S)-7-methylcarthamidin + oxidized [NADPH--hemoprotein reductase] + H2O + H(+). The catalysed reaction is apigenin 4',7-dimethyl ether + reduced [NADPH--hemoprotein reductase] + O2 = ladanein + oxidized [NADPH--hemoprotein reductase] + H2O + H(+). The enzyme catalyses (2S)-naringenin 4',7-dimethyl ether + reduced [NADPH--hemoprotein reductase] + O2 = (2S)-carthamidin-4',7-dimethyl ether + oxidized [NADPH--hemoprotein reductase] + H2O + H(+). Its pathway is flavonoid metabolism. 6-OH hydroxylase involved in the biosynthesis of polymethoxylated flavonoids natural products such as pebrellin, aroma compounds which contribute to the flavor of peppermint, and exhibit pharmacological activities such as anti-allergic, anti-oxidant, antibacterial, anti-proliferative, and anti-inflammatory effects. Catalyzes the 6-hydroxylation of 7-O-methylated precursors such as the conversion of genkwanin (GENK) to scutellarein-7-methyl ether (SCU7Me). Can also use apigenin-7,4'-dimethyl ether (AdM), naringenin-7-methyl ether (SAK) and naringenin-7,4'-dimethyl ether (NdM) as substrates. The chain is Flavonoid-6-hydroxylase from Mentha piperita (Peppermint).